Here is a 146-residue protein sequence, read N- to C-terminus: Protein SprT-like (146 aa).

Positions 6 to 141 (YVKTVSIEDF…GCGLCQGKLI (136 aa)) constitute a SprT-like domain. His64 contacts Zn(2+). Glu65 is a catalytic residue. Position 68 (His68) interacts with Zn(2+).

It belongs to the SprT family. It depends on Zn(2+) as a cofactor.

It localises to the cytoplasm. This is Protein SprT-like from Streptococcus thermophilus (strain CNRZ 1066).